Here is a 307-residue protein sequence, read N- to C-terminus: Homoserine O-acetyltransferase (307 aa).

Cys142 acts as the Acyl-thioester intermediate in catalysis. Residues Lys163 and Ser192 each contribute to the substrate site. Residue His235 is the Proton acceptor of the active site. Glu237 is an active-site residue. Residue Arg249 coordinates substrate.

It belongs to the MetA family.

The protein resides in the cytoplasm. It catalyses the reaction L-homoserine + acetyl-CoA = O-acetyl-L-homoserine + CoA. The protein operates within amino-acid biosynthesis; L-methionine biosynthesis via de novo pathway; O-acetyl-L-homoserine from L-homoserine: step 1/1. Transfers an acetyl group from acetyl-CoA to L-homoserine, forming acetyl-L-homoserine. This Desulfitobacterium hafniense (strain DSM 10664 / DCB-2) protein is Homoserine O-acetyltransferase.